The primary structure comprises 160 residues: Heat shock protein beta-6 (160 aa).

The tract at residues 1–72 (MEIPVPVQPS…PVAQVPTDPG (72 aa)) is involved in stabilization of the HSPB1:HSBP6 heterodimer. Ser-16 is subject to Phosphoserine; by PKA. The sHSP domain occupies 55-160 (LRAPSVALPV…AQAPPPAAAK (106 aa)). At Gln-66 the chain carries Deamidated glutamine.

The protein belongs to the small heat shock protein (HSP20) family. As to quaternary structure, homodimer. Small heat shock proteins form high molecular mass oligomers containing variable number of monomers; these oligomers display a very flexible quaternary structure easily exchanging their subunits. Heterooligomer with HSPB1; formed through oligomerization of HSPB1:HSBP6 dimers; subunit exchange leads to formation of at least two different heterooligomeric complexes, differing in variable quantities of HSPB1 and HSPB6 homodimers in addition to HSPB1:HSPB6 heterodimers. Heterooligomer with CRYAB; large heterooligomers consist of CRYAB homodimers and HSPB5:HSPB6 heterodimers but lacking HSPB6 homodimers. Interacts with BAG3. Interacts (phosphorylated) with YWHAZ. Interacts with PDE4A and PDE4D; required for maintenance of the non-phosphorylated state of HSPB6 under basal conditions. Interacts with KDR. Interacts with PRKD1. The N-terminus is blocked. In terms of processing, phosphorylated at Ser-16 by PKA and probably PKD1K; required to protect cardiomyocytes from apoptosis.

The protein localises to the cytoplasm. Its subcellular location is the nucleus. The protein resides in the secreted. Its function is as follows. Small heat shock protein which functions as a molecular chaperone probably maintaining denatured proteins in a folding-competent state. Seems to have versatile functions in various biological processes. Plays a role in regulating muscle function such as smooth muscle vasorelaxation and cardiac myocyte contractility. May regulate myocardial angiogenesis implicating KDR. Overexpression mediates cardioprotection and angiogenesis after induced damage. Stabilizes monomeric YWHAZ thereby supporting YWHAZ chaperone-like activity. The protein is Heat shock protein beta-6 (HSPB6) of Homo sapiens (Human).